We begin with the raw amino-acid sequence, 524 residues long: Probable glycine dehydrogenase (decarboxylating) subunit 2 (524 aa).

The residue at position 296 (K296) is an N6-(pyridoxal phosphate)lysine.

Belongs to the GcvP family. C-terminal subunit subfamily. The glycine cleavage system is composed of four proteins: P, T, L and H. In this organism, the P 'protein' is a heterodimer of two subunits. Requires pyridoxal 5'-phosphate as cofactor.

The enzyme catalyses N(6)-[(R)-lipoyl]-L-lysyl-[glycine-cleavage complex H protein] + glycine + H(+) = N(6)-[(R)-S(8)-aminomethyldihydrolipoyl]-L-lysyl-[glycine-cleavage complex H protein] + CO2. In terms of biological role, the glycine cleavage system catalyzes the degradation of glycine. The P protein binds the alpha-amino group of glycine through its pyridoxal phosphate cofactor; CO(2) is released and the remaining methylamine moiety is then transferred to the lipoamide cofactor of the H protein. This Caulobacter vibrioides (strain ATCC 19089 / CIP 103742 / CB 15) (Caulobacter crescentus) protein is Probable glycine dehydrogenase (decarboxylating) subunit 2.